Consider the following 517-residue polypeptide: Serine hydroxymethyltransferase 2, mitochondrial (517 aa).

The transit peptide at 1-31 directs the protein to the mitochondrion; it reads MAMASALRRLSSSSNKPLQRLFNGGHLYSMS. N6-(pyridoxal phosphate)lysine is present on Lys287.

The protein belongs to the SHMT family. In terms of assembly, homotetramer. Pyridoxal 5'-phosphate serves as cofactor.

Its subcellular location is the mitochondrion. It catalyses the reaction (6R)-5,10-methylene-5,6,7,8-tetrahydrofolate + glycine + H2O = (6S)-5,6,7,8-tetrahydrofolate + L-serine. Its pathway is one-carbon metabolism; tetrahydrofolate interconversion. Its function is as follows. Catalyzes the interconversion of serine and glycine. In Flaveria pringlei, this protein is Serine hydroxymethyltransferase 2, mitochondrial.